The primary structure comprises 151 residues: Deoxyuridine 5'-triphosphate nucleotidohydrolase (151 aa).

Substrate contacts are provided by residues 70 to 72 (RSG), N83, 87 to 89 (LID), and M97.

Belongs to the dUTPase family. It depends on Mg(2+) as a cofactor.

The catalysed reaction is dUTP + H2O = dUMP + diphosphate + H(+). It functions in the pathway pyrimidine metabolism; dUMP biosynthesis; dUMP from dCTP (dUTP route): step 2/2. Functionally, this enzyme is involved in nucleotide metabolism: it produces dUMP, the immediate precursor of thymidine nucleotides and it decreases the intracellular concentration of dUTP so that uracil cannot be incorporated into DNA. The chain is Deoxyuridine 5'-triphosphate nucleotidohydrolase from Pseudomonas fluorescens (strain ATCC BAA-477 / NRRL B-23932 / Pf-5).